The chain runs to 699 residues: Elongation factor G (699 aa).

Residues Glu8–Ile283 enclose the tr-type G domain. GTP contacts are provided by residues Ala17–Thr24, Asp81–His85, and Asn135–Asp138.

This sequence belongs to the TRAFAC class translation factor GTPase superfamily. Classic translation factor GTPase family. EF-G/EF-2 subfamily.

The protein resides in the cytoplasm. Its function is as follows. Catalyzes the GTP-dependent ribosomal translocation step during translation elongation. During this step, the ribosome changes from the pre-translocational (PRE) to the post-translocational (POST) state as the newly formed A-site-bound peptidyl-tRNA and P-site-bound deacylated tRNA move to the P and E sites, respectively. Catalyzes the coordinated movement of the two tRNA molecules, the mRNA and conformational changes in the ribosome. The sequence is that of Elongation factor G from Rickettsia parkeri.